Consider the following 78-residue polypeptide: uncharacterized protein (78 aa).

This is an uncharacterized protein from Treponema pallidum (strain Nichols).